The primary structure comprises 267 residues: Ribosyldihydronicotinamide dehydrogenase-like protein traD (267 aa).

FAD-binding positions include histidine 9, 15 to 16 (LN), and 100 to 103 (LWWF). 122 to 124 (GHG) lines the substrate pocket. FAD contacts are provided by residues 152–155 (TLGG) and tyrosine 160.

It belongs to the NAD(P)H dehydrogenase (quinone) family. Homodimer. The cofactor is FAD.

The protein operates within secondary metabolite biosynthesis. Its function is as follows. Ribosyldihydronicotinamide dehydrogenase-like protein; part of the tra gene cluster that produces terrestric acid. The clavatol biosynthesis cluster cla and the terrestric acid cluster tra are both involved in the production of peniphenones and penilactones. The non-reducing PKS claF is responsible for the formation of clavatol from successive condensations of 3 malonyl-CoA units, presumably with a simple acetyl-CoA starter unit, and 2 methylation steps. The esterase claE probably collaborates with claF by catalyzing the hydrolysis of ACP-bound acyl intermediates to free the ACP from stalled intermediates. The clavatol oxidase claD then converts clavatol to hydroxyclavatol. Spontaneous dehydration of hydroxyclavatol leads to the accumulation of the highly active ortho-quinone methide. On the other hand, the PKS-NRPS hybrid traA is involved in the formation of crustosic acid, with the help of traB and traD. The polyketide synthase module (PKS) of traA is responsible for the synthesis of the polyketide backbone via the condensation of an acetyl-CoA starter unit with 3 malonyl-CoA units. The downstream nonribosomal peptide synthetase (NRPS) module then amidates the carboxyl end of the polyketide with L-malic acid. Because traA lacks a designated enoylreductase (ER) domain, the required activity is provided the enoyl reductase traG. Crustosic acid undergoes decarboxylation and isomerization to the terrestric acid, catalyzed by the 2-oxoglutarate-dependent dioxygenase traH. Both acids are further converted to the 2 gamma-butyrolactones (R)-5-methyltetronic acid and (S)-5-carboxylmethyltetronic acid, with involvement of the cytochrome P450 monooxygenase claJ. Spontaneous addition of the methide to these gamma-butyrolactones leads to peniphenone D and penilactone D, which undergo again stereospecific attacking by methide to give penilactones A and B. In Penicillium crustosum (Blue mold fungus), this protein is Ribosyldihydronicotinamide dehydrogenase-like protein traD.